We begin with the raw amino-acid sequence, 187 residues long: Ribonuclease M5 (187 aa).

A Toprim domain is found at 5-88 (KEVIVVEGKD…AFLPRKAGVP (84 aa)). Mg(2+) contacts are provided by E11, D57, and D59.

The protein belongs to the ribonuclease M5 family. Requires Mg(2+) as cofactor.

It is found in the cytoplasm. The enzyme catalyses Endonucleolytic cleavage of RNA, removing 21 and 42 nucleotides, respectively, from the 5'- and 3'-termini of a 5S-rRNA precursor.. Functionally, required for correct processing of both the 5' and 3' ends of 5S rRNA precursor. Cleaves both sides of a double-stranded region yielding mature 5S rRNA in one step. This chain is Ribonuclease M5, found in Lactiplantibacillus plantarum (strain ATCC BAA-793 / NCIMB 8826 / WCFS1) (Lactobacillus plantarum).